The sequence spans 1923 residues: MAQSSTSHDSGPQGLMRRPSRSAATTVSIEVFDHEVVPASLGTIAPILRVAAEIEHERPRVAYLCRFYAFEKAHRLDPSSGGRGVRQFKTLLFQRLERDNASSLASRVKKTDGREVESFYQQYYEHYVRALDQGDQADRAQLGKAYQTAGVLFEVLMAVNKSEKVEAVAPEIIAAARDVQEKNEIYAPYNILPLDSAGASQSVMQLEEVKAAVAALGNTRGLNWPSGFEQHRKKTGNLDLLDWLRAMFGFQRDNVRNQREHLVCLFADNHIRLTPKPEPLNKLDDRAVDTVMSKLFKNYKNWCKFLGRKHSLRLPQAAQDIQQRKILYMGLYLLIWGEAANIRFMPECLCYIFHNMAYELHGLLAGNVSIVTGENIKPSYGGDDEAFLRKVITPIYRVVQTEANKNANGKAAHSDWSNYDDLNEYFWTPDCFSLGWPMRDDGDLFKSTRDTTQGKKGSFRKAGRTGKSNFTETRTFWHIYHSFDRLWTFYLLALQAMIILAFERVELREILRKDVLYALSSIFITAAFLRFLQSVLDVILNFPGFHRWKFTDVLRNILKIVVSLAWCVVLPLCYAQSVSFAPGKLKQWLSFLPQVKGVPPLYIMAVALYLLPNVLAAIMFIFPMLRRWIENSDWHIFRLLLWWSQPRIYVGRGMHESQIALIKYTIFWLLLFCCKFAFSYFLQVKLLVKPTNAIMSIRHVKYKWHEFFPNAEHNYGAVVSLWLPVILVYFMDTQIWYAIFSTICGGVIGAFDRLGEIRTLGMLRSRFQSLPGAFNTYLVPSDKTRRRGFSLSKRFAEVTAARRTEAAKFSQLWNEIISSFREEDLISDREMDLLLVPYTSDPSLKLIQWPPFLLASKIPIALDMAAQFRTRDSDLWKRICADEYMKCAVIECYESFKHVLHTLVIGENEKRIIGIIIKEVESNISKNSFLSNFRMAPLPALCSKFVELVGILKNADPAKRDTVVLLLQDMLEVVTRDMMQNENRELVELGHTNKESGRQLFAGTDAKPAILFPPVATAQWHEQISRLHLLLTVKESAMDVPTNLEAQRRIAFFTNSLFMDMPRAPRVRNMLSFSVLTPYYSEETVYSKNDLEMENEDGVSVVYYLQKIFPDEWTNFLERLDCKDETSVLESEENILQLRHWVSLRGQTLFRTVRGMMYYRRALKLQAFLDMANETEILAGYKAISEPTEEDKKSQRSLYTQLEAVADLKFTYVATCQNYGNQKRSGDRRATDILNLMVNNPSLRVAYIDEVEEREGGKVQKVFYSVLIKAVDNLDQEIYRIKLPGPAKIGEGKPENQNHALIFTRGEALQAIDMNQDHYLEEALKMRNLLEEFNEDHGVRAPTILGFREHIFTGSVSSLAWFMSNQETSFVTIGQRVLASPLKVRFHYGHPDVFDRIFHITRGGISKASRGINLSEDIFAGFNSTLRRGNVTHHEYIQVGKGRDVGLNQISLFEAKVACGNGEQTLSRDLYRLGHRFDFFRMMSCYFTTVGFYISSMIVVLTVYAFLYGRLYLSLSGVEEAIVKFAAAKGDSSLKAAMASQSVVQLGLLMTLPMVMEIGLERGFRTALSDLIIMQLQLAPVFFTFSLGTKVHYYGRTILHGGSKYRATGRGFVVKHEKFAENYRMYSRSHFVKGMELMVLLICYRIYGKAAEDSVGYALVMGSTWFLVGSWLFAPFFFNPSGFEWQKIVDDWDDWNKWISSRGGIGVPANKSWESWWEEEQEHLLHSGFFGKFWEIFLSLRYFIYQYGIVYQLNLTKESRMGKQHSIIVYGLSWLVIVAVMIVLKIVSMGRKKFSADFQLMFRLLKLFLFIGSVVIVGMLFHFLKLTVGDIMQSLLAFLPTGWALLQISQVARPLMKTVGMWGSVKALARGYEYIMGVVIFMPVTVLAWFPFVSEFQTRLLFNQAFSRGLQIQRILAGGKKQK.

Positions 1-10 are enriched in polar residues; it reads MAQSSTSHDS. The segment at 1–22 is disordered; sequence MAQSSTSHDSGPQGLMRRPSRS. The Cytoplasmic segment spans residues 1 to 481; sequence MAQSSTSHDS…ETRTFWHIYH (481 aa). The chain crosses the membrane as a helical span at residues 482–502; that stretch reads SFDRLWTFYLLALQAMIILAF. Residues 503–521 are Extracellular-facing; that stretch reads ERVELREILRKDVLYALSS. Residues 522-542 traverse the membrane as a helical segment; sequence IFITAAFLRFLQSVLDVILNF. At 543 to 559 the chain is on the cytoplasmic side; the sequence is PGFHRWKFTDVLRNILK. A helical transmembrane segment spans residues 560 to 580; it reads IVVSLAWCVVLPLCYAQSVSF. Over 581-601 the chain is Extracellular; that stretch reads APGKLKQWLSFLPQVKGVPPL. A helical transmembrane segment spans residues 602 to 622; the sequence is YIMAVALYLLPNVLAAIMFIF. Topologically, residues 623–658 are cytoplasmic; it reads PMLRRWIENSDWHIFRLLLWWSQPRIYVGRGMHESQ. Residues 659 to 679 form a helical membrane-spanning segment; sequence IALIKYTIFWLLLFCCKFAFS. Over 680 to 719 the chain is Extracellular; it reads YFLQVKLLVKPTNAIMSIRHVKYKWHEFFPNAEHNYGAVV. The chain crosses the membrane as a helical span at residues 720–740; that stretch reads SLWLPVILVYFMDTQIWYAIF. At 741 to 1486 the chain is on the cytoplasmic side; that stretch reads STICGGVIGA…FDFFRMMSCY (746 aa). Residues 1487 to 1507 form a helical membrane-spanning segment; sequence FTTVGFYISSMIVVLTVYAFL. Residues 1508–1535 are Extracellular-facing; that stretch reads YGRLYLSLSGVEEAIVKFAAAKGDSSLK. Residues 1536-1556 form a helical membrane-spanning segment; it reads AAMASQSVVQLGLLMTLPMVM. Topologically, residues 1557 to 1566 are cytoplasmic; that stretch reads EIGLERGFRT. A helical membrane pass occupies residues 1567–1587; it reads ALSDLIIMQLQLAPVFFTFSL. Residues 1588–1630 lie on the Extracellular side of the membrane; sequence GTKVHYYGRTILHGGSKYRATGRGFVVKHEKFAENYRMYSRSH. Residues 1631 to 1651 traverse the membrane as a helical segment; sequence FVKGMELMVLLICYRIYGKAA. The Cytoplasmic segment spans residues 1652 to 1657; it reads EDSVGY. Residues 1658–1678 traverse the membrane as a helical segment; it reads ALVMGSTWFLVGSWLFAPFFF. Residues 1679-1732 are Extracellular-facing; it reads NPSGFEWQKIVDDWDDWNKWISSRGGIGVPANKSWESWWEEEQEHLLHSGFFGK. Asn-1710 is a glycosylation site (N-linked (GlcNAc...) asparagine). Residues 1733 to 1755 form a helical membrane-spanning segment; sequence FWEIFLSLRYFIYQYGIVYQLNL. Over 1756 to 1766 the chain is Cytoplasmic; that stretch reads TKESRMGKQHS. A helical transmembrane segment spans residues 1767–1787; sequence IIVYGLSWLVIVAVMIVLKIV. Over 1788–1803 the chain is Extracellular; that stretch reads SMGRKKFSADFQLMFR. Residues 1804-1824 traverse the membrane as a helical segment; that stretch reads LLKLFLFIGSVVIVGMLFHFL. A topological domain (cytoplasmic) is located at residue Lys-1825. The chain crosses the membrane as a helical span at residues 1826–1846; the sequence is LTVGDIMQSLLAFLPTGWALL. Over 1847–1873 the chain is Extracellular; the sequence is QISQVARPLMKTVGMWGSVKALARGYE. The helical transmembrane segment at 1874 to 1894 threads the bilayer; that stretch reads YIMGVVIFMPVTVLAWFPFVS. Topologically, residues 1895 to 1923 are cytoplasmic; sequence EFQTRLLFNQAFSRGLQIQRILAGGKKQK.

This sequence belongs to the glycosyltransferase 48 family.

It localises to the cell membrane. It catalyses the reaction [(1-&gt;3)-beta-D-glucosyl](n) + UDP-alpha-D-glucose = [(1-&gt;3)-beta-D-glucosyl](n+1) + UDP + H(+). Its function is as follows. Required for the formation of the callose wall separating the tetraspores (interstitial wall) and surrounding the pollen mother cells (peripheral wall). Required for exine formation on pollen wall. May be involved in callose synthesis during pollen tube growth. During plant growth and development, callose is found as a transitory component of the cell plate in dividing cells, is a major component of pollen mother cell walls and pollen tubes, and is found as a structural component of plasmodesmatal canals. This chain is Callose synthase 5 (CALS5), found in Arabidopsis thaliana (Mouse-ear cress).